Reading from the N-terminus, the 147-residue chain is Phospholipase A2 SSD1043 (147 aa).

Residues 1–22 (MSPKFMFFSIIAVWSCAAVTEA) form the signal peptide. Residues 23–28 (LFIQHR) constitute a propeptide that is removed on maturation. Disulfide bonds link cysteine 55-cysteine 71, cysteine 70-cysteine 130, cysteine 77-cysteine 123, cysteine 86-cysteine 116, and cysteine 109-cysteine 121. 2 residues coordinate Ca(2+): glycine 56 and glycine 58. Residue histidine 74 is part of the active site. Aspartate 75 serves as a coordination point for Ca(2+). Aspartate 124 is an active-site residue.

It depends on Ca(2+) as a cofactor. As to expression, expressed by the venom gland.

It is found in the secreted. It catalyses the reaction a 1,2-diacyl-sn-glycero-3-phosphocholine + H2O = a 1-acyl-sn-glycero-3-phosphocholine + a fatty acid + H(+). PLA2 catalyzes the calcium-dependent hydrolysis of the 2-acyl groups in 3-sn-phosphoglycerides. The polypeptide is Phospholipase A2 SSD1043 (Scolopendra dehaani (Thai centipede)).